Here is a 772-residue protein sequence, read N- to C-terminus: Polyribonucleotide nucleotidyltransferase (772 aa).

Asp486 and Asp492 together coordinate Mg(2+). The KH domain maps to 553 to 612 (PRIETLQIDKSKIRDVIGTGGKVIREIVATTGAKVDIDDEGLIKISSSDLTQIEAAKNWI). The S1 motif domain occupies 622-690 (GKIYKGKVVN…QRGKVRLSMR (69 aa)). The interval 695–772 (ETGAELEDTR…HMPAFLKSDD (78 aa)) is disordered. The span at 701–760 (EDTRPPREPREPRGDRGDRGDRGDRRGPRGDRGPRREGGDRGPRREGGDRPRRDRDDGPA) shows a compositional bias: basic and acidic residues.

The protein belongs to the polyribonucleotide nucleotidyltransferase family. Requires Mg(2+) as cofactor.

The protein localises to the cytoplasm. The catalysed reaction is RNA(n+1) + phosphate = RNA(n) + a ribonucleoside 5'-diphosphate. In terms of biological role, involved in mRNA degradation. Catalyzes the phosphorolysis of single-stranded polyribonucleotides processively in the 3'- to 5'-direction. The chain is Polyribonucleotide nucleotidyltransferase from Novosphingobium aromaticivorans (strain ATCC 700278 / DSM 12444 / CCUG 56034 / CIP 105152 / NBRC 16084 / F199).